A 159-amino-acid polypeptide reads, in one-letter code: Phosphopantetheine adenylyltransferase (159 aa).

Residue threonine 9 coordinates substrate. Residues 9–10 (TF) and histidine 17 contribute to the ATP site. Substrate contacts are provided by lysine 41, leucine 73, and arginine 87. ATP contacts are provided by residues 88 to 90 (GLR), glutamate 98, and 123 to 129 (YSFISST).

It belongs to the bacterial CoaD family. In terms of assembly, homohexamer. It depends on Mg(2+) as a cofactor.

It localises to the cytoplasm. It catalyses the reaction (R)-4'-phosphopantetheine + ATP + H(+) = 3'-dephospho-CoA + diphosphate. Its pathway is cofactor biosynthesis; coenzyme A biosynthesis; CoA from (R)-pantothenate: step 4/5. Functionally, reversibly transfers an adenylyl group from ATP to 4'-phosphopantetheine, yielding dephospho-CoA (dPCoA) and pyrophosphate. The protein is Phosphopantetheine adenylyltransferase of Pseudomonas fluorescens (strain ATCC BAA-477 / NRRL B-23932 / Pf-5).